The primary structure comprises 246 residues: Sec-independent protein translocase protein TatB (246 aa).

Residues 1-21 (MFDIGWSELLVIAVVLIVVVG) form a helical membrane-spanning segment. Disordered regions lie at residues 94-122 (SDLQ…APLV), 179-204 (SRSK…PKPT), and 225-246 (VADA…KDEA). 2 stretches are compositionally biased toward polar residues: residues 97–112 (QKAT…TAAP) and 187–197 (PETTVATNASE).

This sequence belongs to the TatB family. As to quaternary structure, the Tat system comprises two distinct complexes: a TatABC complex, containing multiple copies of TatA, TatB and TatC subunits, and a separate TatA complex, containing only TatA subunits. Substrates initially bind to the TatABC complex, which probably triggers association of the separate TatA complex to form the active translocon.

It localises to the cell inner membrane. Its function is as follows. Part of the twin-arginine translocation (Tat) system that transports large folded proteins containing a characteristic twin-arginine motif in their signal peptide across membranes. Together with TatC, TatB is part of a receptor directly interacting with Tat signal peptides. TatB may form an oligomeric binding site that transiently accommodates folded Tat precursor proteins before their translocation. This Agrobacterium fabrum (strain C58 / ATCC 33970) (Agrobacterium tumefaciens (strain C58)) protein is Sec-independent protein translocase protein TatB.